The primary structure comprises 145 residues: Regulator of sigma D (145 aa).

Belongs to the Rsd/AlgQ family. Interacts with RpoD.

It is found in the cytoplasm. In terms of biological role, binds RpoD and negatively regulates RpoD-mediated transcription activation by preventing the interaction between the primary sigma factor RpoD with the catalytic core of the RNA polymerase and with promoter DNA. May be involved in replacement of the RNA polymerase sigma subunit from RpoD to RpoS during the transition from exponential growth to the stationary phase. The polypeptide is Regulator of sigma D (Sodalis glossinidius (strain morsitans)).